A 213-amino-acid chain; its full sequence is Bcl-2-related ovarian killer protein (213 aa).

The short motif at 32–44 (KALCRDYINSRLI) is the BH4 element. A BH3 motif is present at residues 67–83 (VSAILLRLGDELEYIRP). The short motif at 113–132 (QIFTAGITWGKVVSLYAVAA) is the BH1 element. The BH2 signature appears at 165–179 (WLKRRGGWADITKCV). Residues 190–210 (WLVAAVCSFGHFLKAIFFVLL) traverse the membrane as a helical segment.

Belongs to the Bcl-2 family.

It localises to the membrane. May play a role in apoptosis. The protein is Bcl-2-related ovarian killer protein of Gallus gallus (Chicken).